An 820-amino-acid chain; its full sequence is MKLNKITSYIGFALLSGGALAAPSTPTLDWQPQQYSFVEVNVDGLGSYKQLVKAKDVVDISIKWNAWSGSGGDNYKVYFDDLLVNQGSLPAGTKSGVVQFPYTKSGRHQLYLELCEGTVCARSAGKEIVIADTDGAHLAPLPMNVDPNNRNNGTIPGRVTGAYFVEWGIYGRNYDVTKIPAHNLSHILYGFIPICGPNESLKSIEIGNSWRALQTACADSQDYEVVIHDPWAAVQKSMPGVDAKDPIRGVYSQLMALKQRYPDLKILPSVGGWTLSDPFHGFTNKANRDTFVASVKQFLKTWKFYDGVDIDWEFPGGDGPNPDLGDPINDGPAYVALMQELRAMLDELEAETGRQYELTSAIGAGYDKIEDVDYQAAQQYMDYIFAMTYDFYGAWNNETGHQTGIYCGSHLSTDECNGTGVDDNGVPRKGPAYTGDHAIQLLLQQGVQPSKLVMGVAMYGRGWEGVLDANAAIPGNPMTAPGNGPLTGSTSEGVWEPGIMDYKAIAANAVGQGGSGVNGYEVGYDEQAQAAYVWNRSNGKLITYDSPRSVIAKGQYANTHQLAGLFGWEIDADNGDILNAMYDGLTAGEIPNRAPTIGVSGPINVTSGQVVNVDAQASDLDNDPLTYSWVAAPGLALSANNTAAVAVTAPSVAQQTSYDLTVTVNDGALSTTKTIVVVVNPEGANAAPVVTPVSDISVNEGASATVNVSATDPEGAALSYSWSVPAELSVANGSSATITAANVTADTTVPVTVTVSDGVNAVDTTFNVTIKDGAEYPTWDRSTVYVGGDRVIHNSNVFEAKWWTQGEEPGTADVWKAVTN.

The signal sequence occupies residues 1–21 (MKLNKITSYIGFALLSGGALA). The 431-residue stretch at 158–588 (RVTGAYFVEW…NAMYDGLTAG (431 aa)) folds into the GH18 domain. Residue E313 is the Proton donor of the active site.

It belongs to the glycosyl hydrolase 18 family. Chitinase class II subfamily.

The catalysed reaction is Random endo-hydrolysis of N-acetyl-beta-D-glucosaminide (1-&gt;4)-beta-linkages in chitin and chitodextrins.. Stimulated by magnesium ions; inhibited by N-bromosuccinimide and 2-hydroxy-5-nitrobenzyl bromide. This is Chitinase A (chiA) from Pseudoalteromonas piscicida.